Consider the following 434-residue polypeptide: Zinc finger and BTB domain-containing protein 8A (434 aa).

In terms of domain architecture, BTB spans 24–92 (CDCSILVEGK…VYSGKLSLTG (69 aa)). The interval 134 to 238 (SLSDKDTGSN…SGNHVSQSEE (105 aa)) is disordered. 2 positions are modified to phosphoserine: serine 161 and serine 167. Glycyl lysine isopeptide (Lys-Gly) (interchain with G-Cter in SUMO2) cross-links involve residues lysine 172, lysine 176, and lysine 193. The segment covering 192-202 (AKHEQRKEPSK) has biased composition (basic and acidic residues). A compositionally biased stretch (polar residues) spans 226–238 (QTDSGNHVSQSEE). C2H2-type zinc fingers lie at residues 275 to 297 (FKCP…LRCH) and 303 to 326 (YPCQ…RTIH). A Glycyl lysine isopeptide (Lys-Gly) (interchain with G-Cter in SUMO2) cross-link involves residue lysine 430.

It localises to the nucleus. In terms of biological role, may be involved in transcriptional regulation. The sequence is that of Zinc finger and BTB domain-containing protein 8A (Zbtb8a) from Mus musculus (Mouse).